Here is a 113-residue protein sequence, read N- to C-terminus: Large ribosomal subunit protein P2 (113 aa).

The disordered stretch occupies residues 60 to 113 (SKVSSLSAGAGPSGGAAAAGADAGAAEAEKEEEPQEEEADVNMGDIFGGDDEDY). Residues 74-85 (GAAAAGADAGAA) show a composition bias toward low complexity. Positions 88–99 (EKEEEPQEEEAD) are enriched in acidic residues.

This sequence belongs to the eukaryotic ribosomal protein P1/P2 family. In terms of assembly, P1 and P2 exist as dimers at the large ribosomal subunit. In terms of processing, phosphorylated.

Plays an important role in the elongation step of protein synthesis. The polypeptide is Large ribosomal subunit protein P2 (Euplotes raikovi).